We begin with the raw amino-acid sequence, 151 residues long: 18 kDa heat shock protein (151 aa).

The region spanning 38–151 (TFNGNAGFKV…KDNGRRIDIH (114 aa)) is the sHSP domain.

The protein belongs to the small heat shock protein (HSP20) family.

In terms of biological role, probable chaperone. The polypeptide is 18 kDa heat shock protein (hsp18) (Clostridium acetobutylicum (strain ATCC 824 / DSM 792 / JCM 1419 / IAM 19013 / LMG 5710 / NBRC 13948 / NRRL B-527 / VKM B-1787 / 2291 / W)).